The following is a 920-amino-acid chain: MEAIDELSQLSDSMRQAASLLADEDPDETSSSRRPATSLNVVALGNVGAGKSAVLNSLIGHPVLPTGENGATRAPIIIDLSREESLSSKAIILQIDNKNQQVSASALRHSLQDRLSKGASGRGRDEIYLKLRTSTAPPLKLIDLPGLDQRIVDDSMIGEHAQHNDAILLVVVPASQASEISSSRALKIAKEYDPESTRTVGIISKIDQAAENPKSLAAVQALLSNQGPPKTTDIPWVALIGQSVSIASAQSGGSENSLETAWRAESESLKSILTGAPQSKLGRIALVDTLASQIRSRMKLRLPNILTGLQGKSQIVQDELARLGEQLVSSAEGTRAIALELCREFEDKFLLHLAGGEGSGWKVVASFEGNFPNRIKKLPLDRHFDLNNVKRIVLEADGYQPYLISPEKGLRSLIKTVLELAKDPARLCVDEVHRVLVDIVSASANATPGLGRYPPFKREVVAIASAALDGFKNEAKKMVVALVDMERAFVPPQHFIRLVQRRMERQRREEELKGRSSKKGQDAEQSLLNRATSPQPDGPSSTGGSLKSLRDKLMPQDKDKDKEKETPEVSGLKTAGPEGEITAGYLMKKSAKTNGWSRRWFVLNEKTGKLGYTKKQEERNFRGTVTLEECSIEEISDDEGEKSKSSKDKKSNGPDSKGPGLVFKITCRVPYKTVLKAHNALVLKAESMVDKNEWINKLQKVIQARGGQVGSASMRQSLSEGSLDKMVRKPVDPEEELRWMSQEVRGYVEAVLNSLAANVPKAVVLCQVEKSKEDMLNQLYSSISAIGNERIESLIQEDQNVKRRRDRYQKQSSLLSKLTRQLSIHDNRAAAASSWSDNSGTESSPRTNGGSSGEDWMNAFNAAASGPDSLKRYGSGGHSRRYSDPAQNGEDSSGSGGSSRRTTPNRLPPAPPQSGSSYRY.

Position 1 is an N-acetylmethionine (methionine 1). One can recognise a Dynamin-type G domain in the interval 35 to 303 (PATSLNVVAL…IRSRMKLRLP (269 aa)). The G1 motif stretch occupies residues 45–52 (GNVGAGKS). 45-53 (GNVGAGKSA) contacts GTP. The G2 motif stretch occupies residues 71 to 73 (ATR). Residues 143–146 (DLPG) form a G3 motif region. A G4 motif region spans residues 204–207 (SKID). 204–210 (SKIDQAA) contributes to the GTP binding site. The segment at 238–241 (ALIG) is G5 motif. Position 246 to 249 (246 to 249 (IASA)) interacts with GTP. Positions 507–522 (RREEELKGRSSKKGQD) are enriched in basic and acidic residues. 2 disordered regions span residues 507–577 (RREE…TAGP) and 632–657 (IEEI…PDSK). Polar residues predominate over residues 523–545 (AEQSLLNRATSPQPDGPSSTGGS). 2 stretches are compositionally biased toward basic and acidic residues: residues 548–567 (SLRD…KETP) and 641–652 (EKSKSSKDKKSN). A PH domain is found at 579–703 (GEITAGYLMK…WINKLQKVIQ (125 aa)). Residues 737–830 (LRWMSQEVRG…QLSIHDNRAA (94 aa)) form the GED domain. The important for homodimerization stretch occupies residues 747–761 (YVEAVLNSLAANVPK). Residues 788-812 (NERIESLIQEDQNVKRRRDRYQKQS) adopt a coiled-coil conformation. A disordered region spans residues 828–920 (RAAAASSWSD…PPQSGSSYRY (93 aa)). A compositionally biased stretch (polar residues) spans 833–849 (SSWSDNSGTESSPRTNG).

The protein belongs to the TRAFAC class dynamin-like GTPase superfamily. Dynamin/Fzo/YdjA family. As to quaternary structure, interacts with DRP1A at the plasma membrane and in forming clathrin-coated vesicles (CCV). As to expression, ubiquitous. Preferentially expressed in siliques.

The protein localises to the cytoplasm. Its subcellular location is the cytoskeleton. It localises to the cytoplasmic vesicle. It is found in the clathrin-coated vesicle. The protein resides in the cell membrane. It carries out the reaction GTP + H2O = GDP + phosphate + H(+). Functionally, putative microtubule-associated force-producing protein, able to bind and hydrolyze GTP. Collaboratively with DRP1A, participates in clathrin-coated vesicle formation during endocytosis. With DRP1A and PIP5K3, required for the precise coordination of polar ARAC3/ROP6 and ARAC4/ROP2 placement and subsequent root hair positioning during planar polarity formation in root hair-forming cells. This chain is Dynamin-2B, found in Arabidopsis thaliana (Mouse-ear cress).